A 345-amino-acid polypeptide reads, in one-letter code: MISNFDCTDNQASSKVLRPPGGGSSDIFGSEMPQTPRNVKNRMASNIFAAEKDNGVKNNVRQGAHRFYFIGDAPRRGQKTVDSHNRLFGEPTRPITPGKNHMKSSIPFGQNTEAVASAQKLLTTNGHYNGKSGSVSSASSSVSSSTENLKMNSGSRSVFRNMSTGPAVKETSLPESLCPPSPVRIEPPTPPADALSIDNSCRDSEIGDVPADNSTYTKSDQVNEACQTRRDSGNNPEQPHSLDKMAGVANIKEPLGLCPNDVKEGAQACSKLDSRNPITGLGLNGDGVGGLKPKKLKIREGNPVTGEGYKAGGNDYNQRQESSNAGTPVINKNRIPPGGYSSGLW.

Positions 1–14 (MISNFDCTDNQASS) are enriched in polar residues. A disordered region spans residues 1–34 (MISNFDCTDNQASSKVLRPPGGGSSDIFGSEMPQ). Phosphoserine is present on Ser24. The residue at position 35 (Thr35) is a Phosphothreonine. The segment covering 78–87 (QKTVDSHNRL) has biased composition (basic and acidic residues). Positions 78-100 (QKTVDSHNRLFGEPTRPITPGKN) are disordered. A phosphothreonine mark is found at Thr92 and Thr96. 3 positions are modified to phosphoserine: Ser105, Ser134, and Ser145. Disordered regions lie at residues 127–241 (HYNG…QPHS) and 300–345 (EGNP…SGLW). Residues 132-145 (SGSVSSASSSVSSS) are compositionally biased toward low complexity. Polar residues predominate over residues 146–164 (TENLKMNSGSRSVFRNMST). Residues 177–191 (LCPPSPVRIEPPTPP) show a composition bias toward pro residues. 2 stretches are compositionally biased toward polar residues: residues 212 to 226 (DNSTYTKSDQVNEAC) and 315 to 326 (DYNQRQESSNAG).

It belongs to the MAP Jupiter family.

The protein resides in the nucleus. The protein localises to the cytoplasm. It is found in the cytoskeleton. It localises to the spindle. In terms of biological role, binds to all microtubule populations. This Drosophila erecta (Fruit fly) protein is Microtubule-associated protein Jupiter.